Here is a 382-residue protein sequence, read N- to C-terminus: MFLKAVVLSLALVAVTGARAEVNADQVATVMWDYFSQLGSNAKKAVEHLQKSELTQQLNTLFQDKLGEVNTYTEDLQKKLVPFATELHERLTKDSEKLKEEIRRELEELRARLLPHATEVSQKIGDNVRELQQRLGPFTGGLRTQVNTQVQQLQRQLKPYAERMESVLRQNIRNLEASVAPYADEFKAKIDQNVEELKGSLTPYAEELKAKIDQNVEELRRSLAPYAQDVQEKLNHQLEGLAFQMKKQAEELKAKISANADELRQKLVPVAENVHGHLKGNTEGLQKSLLELRSHLDQQVEEFRLKVEPYGETFNKALVQQVEDLRQKLGPLAGDVEGHLSFLEKDLRDKVNTFFSTLKEEASQGQSQALPAQEKAQAPLEG.

The signal sequence occupies residues 1–20; the sequence is MFLKAVVLSLALVAVTGARA. Tandem repeats lie at residues 33–54, 60–81, 82–103, 115–136, 137–158, 159–180, 181–202, 203–224, 225–246, 247–268, 269–286, 287–308, and 309–330. Residues 33–330 form a 13 X 22 AA approximate tandem repeats region; it reads DYFSQLGSNA…QVEDLRQKLG (298 aa). Positions 361–382 are disordered; sequence EASQGQSQALPAQEKAQAPLEG.

Belongs to the apolipoprotein A1/A4/E family. In terms of assembly, homodimer. In terms of tissue distribution, secreted in plasma.

The protein localises to the secreted. May have a role in chylomicrons and VLDL secretion and catabolism. Required for efficient activation of lipoprotein lipase by ApoC-II; potent activator of LCAT. Apoa-IV is a major component of HDL and chylomicrons. This Sus scrofa (Pig) protein is Apolipoprotein A-IV (APOA4).